Reading from the N-terminus, the 132-residue chain is Small ribosomal subunit protein uS8 (132 aa).

This sequence belongs to the universal ribosomal protein uS8 family. As to quaternary structure, part of the 30S ribosomal subunit. Contacts proteins S5 and S12.

Its function is as follows. One of the primary rRNA binding proteins, it binds directly to 16S rRNA central domain where it helps coordinate assembly of the platform of the 30S subunit. The polypeptide is Small ribosomal subunit protein uS8 (Anaeromyxobacter sp. (strain Fw109-5)).